The sequence spans 37 residues: Large ribosomal subunit protein bL36 (37 aa).

Belongs to the bacterial ribosomal protein bL36 family.

The polypeptide is Large ribosomal subunit protein bL36 (Synechococcus sp. (strain WH7803)).